The sequence spans 108 residues: Ig kappa chain V-V region HP 124E1 (108 aa).

Residues 1-23 form a framework-1 region; sequence DIQMTQTTSSLSASLGDRVTISC. A disulfide bond links Cys23 and Cys88. Residues 24–34 are complementarity-determining-1; the sequence is RASQDINNYLN. The segment at 35–49 is framework-2; sequence WYQQKPDGTVKLLIY. A complementarity-determining-2 region spans residues 50–56; sequence YTSRLHS. The tract at residues 57 to 88 is framework-3; the sequence is GVPSRFSGSGSGTDYSLTISNLEQEDIATYFC. The complementarity-determining-3 stretch occupies residues 89–97; that stretch reads QQGKTLPRT. The framework-4 stretch occupies residues 98-108; sequence FGGGTKLEIKR.

The chain is Ig kappa chain V-V region HP 124E1 from Mus musculus (Mouse).